The following is a 371-amino-acid chain: Maltose/maltodextrin import ATP-binding protein MalK (371 aa).

One can recognise an ABC transporter domain in the interval 4 to 234; that stretch reads VTLKNVCKAY…PENRFVAGFI (231 aa). An ATP-binding site is contributed by 36 to 43; sequence GPSGCGKS.

This sequence belongs to the ABC transporter superfamily. Maltooligosaccharide importer (TC 3.A.1.1.1) family. As to quaternary structure, the complex is composed of two ATP-binding proteins (MalK), two transmembrane proteins (MalG and MalK) and a solute-binding protein (MalE).

Its subcellular location is the cell inner membrane. It carries out the reaction D-maltose(out) + ATP + H2O = D-maltose(in) + ADP + phosphate + H(+). Functionally, part of the ABC transporter complex MalEFGK involved in maltose/maltodextrin import. Responsible for energy coupling to the transport system. The sequence is that of Maltose/maltodextrin import ATP-binding protein MalK from Vibrio vulnificus (strain CMCP6).